The sequence spans 258 residues: Imidazole glycerol phosphate synthase subunit HisF (258 aa).

Residues D11 and D130 contribute to the active site.

Belongs to the HisA/HisF family. Heterodimer of HisH and HisF.

The protein resides in the cytoplasm. It catalyses the reaction 5-[(5-phospho-1-deoxy-D-ribulos-1-ylimino)methylamino]-1-(5-phospho-beta-D-ribosyl)imidazole-4-carboxamide + L-glutamine = D-erythro-1-(imidazol-4-yl)glycerol 3-phosphate + 5-amino-1-(5-phospho-beta-D-ribosyl)imidazole-4-carboxamide + L-glutamate + H(+). It participates in amino-acid biosynthesis; L-histidine biosynthesis; L-histidine from 5-phospho-alpha-D-ribose 1-diphosphate: step 5/9. In terms of biological role, IGPS catalyzes the conversion of PRFAR and glutamine to IGP, AICAR and glutamate. The HisF subunit catalyzes the cyclization activity that produces IGP and AICAR from PRFAR using the ammonia provided by the HisH subunit. The sequence is that of Imidazole glycerol phosphate synthase subunit HisF from Shigella dysenteriae serotype 1 (strain Sd197).